Reading from the N-terminus, the 497-residue chain is MKTQTTHAAEQHAAKRRWLNAHEEGYHKAMGNRQVQMIAIGGAIGTGLFLGAGARLQMAGPALALVYLICGIFSFFILRALGELVLHRPSSGSFVSYAREFLGEKAAYVAGWMYFINWAMTGIVDITAVALYMHYWGAFGDVPQWVFALGALTIVGTMNMIGVKWFAEMEFWFALIKVLAIVIFLVVGTIFLGTGQPLEGNATGFHLITDNGGFFPHGLLPALVLIQGVVFAFASIELVGTAAGECKDPQKMVPKAINSVIWRIGLFYVGSVVLLVLLLPWNAYQAGQSPFVTFFSKLGVPYIGSIMNIVVLTAALSSLNSGLYCTGRILRSMSMGGSAPKFMAKMSRQHVPYAGILATLVVYVVGVFLNYLVPSRVFEIVLNFASLGIIASWAFIMVCQMRLRQAIKEGKAADVSFKLPGAPFTSWLTLLFLLSVLVLMAFDYPNGTYTIASLPLIAILLVAGWFGVRRRVAEIHRTAPVTADSTESVVLKEEAAT.

The next 12 helical transmembrane spans lie at 34–54 (QVQMIAIGGAIGTGLFLGAGA), 58–78 (MAGPALALVYLICGIFSFFIL), 109–129 (VAGWMYFINWAMTGIVDITAV), 146–166 (VFALGALTIVGTMNMIGVKWF), 171–191 (FWFALIKVLAIVIFLVVGTIF), 219–239 (LLPALVLIQGVVFAFASIELV), 264–284 (IGLFYVGSVVLLVLLLPWNAY), 298–318 (LGVPYIGSIMNIVVLTAALSS), 353–373 (YAGILATLVVYVVGVFLNYLV), 378–398 (FEIVLNFASLGIIASWAFIMV), 422–442 (APFTSWLTLLFLLSVLVLMAF), and 448–468 (TYTIASLPLIAILLVAGWFGV).

This sequence belongs to the amino acid-polyamine-organocation (APC) superfamily. Amino acid transporter (AAT) (TC 2.A.3.1) family.

Its subcellular location is the cell inner membrane. The polypeptide is L-asparagine permease (ansP) (Salmonella typhimurium (strain LT2 / SGSC1412 / ATCC 700720)).